We begin with the raw amino-acid sequence, 135 residues long: Cilia- and flagella-associated protein 144 (135 aa).

Residues 76–100 are disordered; that stretch reads QGPKKKYSETQTEAQEIGWDPNPLI.

This sequence belongs to the CFAP144 family. As to quaternary structure, microtubule inner protein component of sperm flagellar doublet microtubules. In terms of tissue distribution, predominantly expressed in tissues containing motile cilia.

Its subcellular location is the cytoplasm. It localises to the cytoskeleton. The protein resides in the cilium axoneme. It is found in the flagellum axoneme. The sequence is that of Cilia- and flagella-associated protein 144 from Mus musculus (Mouse).